We begin with the raw amino-acid sequence, 378 residues long: Actin-related protein 2/3 complex subunit 1A (378 aa).

WD repeat units follow at residues 8–47 (RFAE…HWER), 53–92 (KHDQ…WVPT), 97–138 (RLNR…WVSK), 143–182 (RHES…VDTK), 203–242 (LSYS…PLAQ), 257–295 (ISEK…KAAS), and 331–375 (VHDN…QELG).

Belongs to the WD repeat ARPC1 family. Component of the Arp2/3 complex composed of ARP2, ARP3, ARPC1/p41-ARC, ARPC2/p34-ARC, ARPC3/p21-ARC, ARPC4/p20-ARC and ARPC5/p16-ARC. Expressed at low levels in all tissues with a relatively highest expression in inflorescences.

Its subcellular location is the cytoplasm. The protein resides in the cytoskeleton. Functionally, functions as a component of the Arp2/3 complex which is involved in regulation of actin polymerization and together with an activating nucleation-promoting factor (NPF) mediates the formation of branched actin networks. Arp2/3 complex plays a critical role in the control of cell morphogenesis via the modulation of cell polarity development. This is Actin-related protein 2/3 complex subunit 1A (ARPC1A) from Arabidopsis thaliana (Mouse-ear cress).